Consider the following 385-residue polypeptide: NADH-quinone oxidoreductase subunit H (385 aa).

The next 8 membrane-spanning stretches (helical) occupy residues 14-34 (GLKLVVIFLMMVQAVPILVWL), 80-100 (FLYYAAPIFALIPGAVAFSAI), 130-150 (IGVGIVFILGVSSLAAYTLLM), 172-192 (ISYELALGLSIVGVIMLYGTF), 219-239 (LPNWGIFYQPVGALLFFSAAF), 280-300 (MMIASGLMVLFFFGGYTIPYV), 325-345 (LIHFLVFNIKFGFFMWVFIWV), and 365-385 (MLPWALANTIITAFVIYIASL).

Belongs to the complex I subunit 1 family. NDH-1 is composed of 14 different subunits. Subunits NuoA, H, J, K, L, M, N constitute the membrane sector of the complex.

The protein resides in the cell inner membrane. It catalyses the reaction a quinone + NADH + 5 H(+)(in) = a quinol + NAD(+) + 4 H(+)(out). In terms of biological role, NDH-1 shuttles electrons from NADH, via FMN and iron-sulfur (Fe-S) centers, to quinones in the respiratory chain. The immediate electron acceptor for the enzyme in this species is believed to be ubiquinone. Couples the redox reaction to proton translocation (for every two electrons transferred, four hydrogen ions are translocated across the cytoplasmic membrane), and thus conserves the redox energy in a proton gradient. This subunit may bind ubiquinone. This chain is NADH-quinone oxidoreductase subunit H, found in Bdellovibrio bacteriovorus (strain ATCC 15356 / DSM 50701 / NCIMB 9529 / HD100).